Consider the following 577-residue polypeptide: Arginine--tRNA ligase (577 aa).

Positions 122 to 132 match the 'HIGH' region motif; sequence PNVAKEMHVGH.

The protein belongs to the class-I aminoacyl-tRNA synthetase family. As to quaternary structure, monomer.

It is found in the cytoplasm. The enzyme catalyses tRNA(Arg) + L-arginine + ATP = L-arginyl-tRNA(Arg) + AMP + diphosphate. The polypeptide is Arginine--tRNA ligase (Haemophilus influenzae (strain PittEE)).